The primary structure comprises 334 residues: D-alanine--D-alanine ligase (334 aa).

An ATP-grasp domain is found at 110-306 (KHVLKSLGID…FDHVVDLIVQ (197 aa)). 138-190 (LPYPFVIKPVRGGSTIGVHAIFSKSEYLDLSAHADTLEDRMIVEEYVSGQEVQ) contacts ATP. Residues aspartate 258, glutamate 272, and asparagine 274 each coordinate Mg(2+).

This sequence belongs to the D-alanine--D-alanine ligase family. Requires Mg(2+) as cofactor. Mn(2+) is required as a cofactor.

The protein localises to the cytoplasm. The enzyme catalyses 2 D-alanine + ATP = D-alanyl-D-alanine + ADP + phosphate + H(+). Its pathway is cell wall biogenesis; peptidoglycan biosynthesis. Functionally, cell wall formation. This is D-alanine--D-alanine ligase from Anaplasma marginale (strain Florida).